A 207-amino-acid polypeptide reads, in one-letter code: Interleukin-6 (207 aa).

An N-terminal signal peptide occupies residues 1 to 18 (MKFFSIASLGLLLVVATA). The segment at 26–47 (REDGENSVTRNKPTRASSGKTR) is disordered. Positions 31 to 44 (NSVTRNKPTRASSG) are enriched in polar residues. Residues C65 and C71 are joined by a disulfide bond. S74 carries the phosphoserine modification. C94 and C104 are joined by a disulfide.

It belongs to the IL-6 superfamily. As to quaternary structure, component of a hexamer of two molecules each of IL6, IL6R and IL6ST; first binds to IL6R to associate with the signaling subunit IL6ST. Interacts with IL6R (via the N-terminal ectodomain); this interaction may be affected by IL6R-binding with SORL1, hence decreasing IL6 cis signaling. Interacts with SORL1 (via the N-terminal ectodomain); this interaction leads to IL6 internalization and lysosomal degradation. May form a trimeric complex with the soluble SORL1 ectodomain and soluble IL6R receptor; this interaction might stabilize circulating IL6, hence promoting IL6 trans signaling.

The protein resides in the secreted. In terms of biological role, cytokine with a wide variety of biological functions in immunity, tissue regeneration, and metabolism. Binds to IL6R, then the complex associates to the signaling subunit IL6ST/gp130 to trigger the intracellular IL6-signaling pathway. The interaction with the membrane-bound IL6R and IL6ST stimulates 'classic signaling', whereas the binding of IL6 and soluble IL6R to IL6ST stimulates 'trans-signaling'. Alternatively, 'cluster signaling' occurs when membrane-bound IL6:IL6R complexes on transmitter cells activate IL6ST receptors on neighboring receiver cells. Its function is as follows. IL6 is a potent inducer of the acute phase response. Rapid production of IL6 contributes to host defense during infection and tissue injury, but excessive IL6 synthesis is involved in disease pathology. In the innate immune response, is synthesized by myeloid cells, such as macrophages and dendritic cells, upon recognition of pathogens through toll-like receptors (TLRs) at the site of infection or tissue injury. In the adaptive immune response, is required for the differentiation of B cells into immunoglobulin-secreting cells. Plays a major role in the differentiation of CD4(+) T cell subsets. Essential factor for the development of T follicular helper (Tfh) cells that are required for the induction of germinal-center formation. Required to drive naive CD4(+) T cells to the Th17 lineage. Also required for proliferation of myeloma cells and the survival of plasmablast cells. Functionally, acts as an essential factor in bone homeostasis and on vessels directly or indirectly by induction of VEGF, resulting in increased angiogenesis activity and vascular permeability. Induces, through 'trans-signaling' and synergistically with IL1B and TNF, the production of VEGF. Involved in metabolic controls, is discharged into the bloodstream after muscle contraction increasing lipolysis and improving insulin resistance. 'Trans-signaling' in central nervous system also regulates energy and glucose homeostasis. Mediates, through GLP-1, crosstalk between insulin-sensitive tissues, intestinal L cells and pancreatic islets to adapt to changes in insulin demand. Also acts as a myokine. Plays a protective role during liver injury, being required for maintenance of tissue regeneration. Also has a pivotal role in iron metabolism by regulating HAMP/hepcidin expression upon inflammation or bacterial infection. Through activation of IL6ST-YAP-NOTCH pathway, induces inflammation-induced epithelial regeneration. The sequence is that of Interleukin-6 (IL6) from Marmota monax (Woodchuck).